The sequence spans 116 residues: Ribosome-binding factor A (116 aa).

Belongs to the RbfA family. In terms of assembly, monomer. Binds 30S ribosomal subunits, but not 50S ribosomal subunits or 70S ribosomes.

It is found in the cytoplasm. Its function is as follows. One of several proteins that assist in the late maturation steps of the functional core of the 30S ribosomal subunit. Associates with free 30S ribosomal subunits (but not with 30S subunits that are part of 70S ribosomes or polysomes). Required for efficient processing of 16S rRNA. May interact with the 5'-terminal helix region of 16S rRNA. The sequence is that of Ribosome-binding factor A from Streptococcus uberis (strain ATCC BAA-854 / 0140J).